Here is a 354-residue protein sequence, read N- to C-terminus: Neutral protease 2 homolog AN7962 (354 aa).

The first 19 residues, Met1 to Ser19, serve as a signal peptide directing secretion. The propeptide occupies Pro20–Arg178. Disulfide bonds link Cys184–Cys255 and Cys262–Cys280. A Zn(2+)-binding site is contributed by His305. Glu306 is a catalytic residue. Zn(2+) contacts are provided by His309 and Asp320.

The protein belongs to the peptidase M35 family. The cofactor is Zn(2+).

It is found in the secreted. The enzyme catalyses Preferential cleavage of bonds with hydrophobic residues in P1'. Also 3-Asn-|-Gln-4 and 8-Gly-|-Ser-9 bonds in insulin B chain.. Secreted metalloproteinase that allows assimilation of proteinaceous substrates. Shows high activities on basic nuclear substrates such as histone and protamine. This chain is Neutral protease 2 homolog AN7962, found in Emericella nidulans (strain FGSC A4 / ATCC 38163 / CBS 112.46 / NRRL 194 / M139) (Aspergillus nidulans).